Reading from the N-terminus, the 247-residue chain is UPF0259 membrane protein BUsg_265 (247 aa).

The next 6 membrane-spanning stretches (helical) occupy residues 20–40 (IKIIIFISVLAAFISILINVL), 82–102 (IFKIFEFLISKTFLLGSIITL), 114–134 (IQFSLNSLCKFLPSLFILNFI), 137–157 (FFIQIGFMFFIFPGIFLSVLL), 188–208 (IVGTSVLFWMCVKFILTTVFS), and 217–237 (FIFLILNINMNIFFSILIVYL).

Belongs to the UPF0259 family.

The protein resides in the cell membrane. This is UPF0259 membrane protein BUsg_265 from Buchnera aphidicola subsp. Schizaphis graminum (strain Sg).